The primary structure comprises 506 residues: DNA polymerase type-X family protein pol4 (506 aa).

The BRCT domain maps to 1–98 (MKILASSTNY…TPGNPYVIWH (98 aa)). The interval 106 to 150 (GSPYTPSTRPASHTEAPNDFENHETPNTENNNEVKSIDNVDQEGS) is disordered. The segment at 348–357 (RGKPVGADVD) is involved in ssDNA binding. Mg(2+)-binding residues include Asp355, Asp357, and Asp419.

It belongs to the DNA polymerase type-X family. It depends on Mg(2+) as a cofactor.

It localises to the cytoplasm. Its subcellular location is the nucleus. The catalysed reaction is DNA(n) + a 2'-deoxyribonucleoside 5'-triphosphate = DNA(n+1) + diphosphate. Its function is as follows. Repair polymerase. Involved in gap-filling in DNA non-homologous end joining (NHEJ) required for double-strand break repair. Can incorporate a ribonucleotide (rNTP) into a primer DNA. This Schizosaccharomyces pombe (strain 972 / ATCC 24843) (Fission yeast) protein is DNA polymerase type-X family protein pol4 (pol4).